The sequence spans 344 residues: Dihydroorotate dehydrogenase (quinone) (344 aa).

FMN contacts are provided by residues 61–65 (AGLDK) and Thr85. Lys65 provides a ligand contact to substrate. Residue 110–114 (NRMGF) participates in substrate binding. FMN-binding residues include Asn138 and Asn171. Asn171 is a substrate binding site. Ser174 serves as the catalytic Nucleophile. Asn176 is a substrate binding site. Lys216 and Thr244 together coordinate FMN. 245–246 (NT) is a substrate binding site. FMN-binding positions include Gly267, Gly296, and 317–318 (YS).

Belongs to the dihydroorotate dehydrogenase family. Type 2 subfamily. In terms of assembly, monomer. Requires FMN as cofactor.

The protein localises to the cell membrane. The enzyme catalyses (S)-dihydroorotate + a quinone = orotate + a quinol. Its pathway is pyrimidine metabolism; UMP biosynthesis via de novo pathway; orotate from (S)-dihydroorotate (quinone route): step 1/1. Its function is as follows. Catalyzes the conversion of dihydroorotate to orotate with quinone as electron acceptor. In Psychrobacter arcticus (strain DSM 17307 / VKM B-2377 / 273-4), this protein is Dihydroorotate dehydrogenase (quinone).